Consider the following 417-residue polypeptide: Snake venom metalloproteinase aculysin-1 (417 aa).

A signal peptide spans 1–20 (MIQVLLVTICLAAFPYQGSS). Residues 21-189 (IMLESGKVND…KKPSWLNLTP (169 aa)) constitute a propeptide that is removed on maturation. The 196-residue stretch at 197–392 (TSVNLQLIVD…KKPKCIHKKS (196 aa)) folds into the Peptidase M12B domain. Disulfide bonds link C308/C387, C349/C371, and C351/C354. H333 lines the Zn(2+) pocket. E334 is a catalytic residue. Zn(2+)-binding residues include H337 and H343. A propeptide spanning residues 393–417 (LKTDTVSTSVSGNEPLDDNVDGFHA) is cleaved from the precursor. A disordered region spans residues 398 to 417 (VSTSVSGNEPLDDNVDGFHA). Over residues 407–417 (PLDDNVDGFHA) the composition is skewed to acidic residues.

The protein belongs to the venom metalloproteinase (M12B) family. P-I subfamily. As to quaternary structure, monomer. Zn(2+) is required as a cofactor. Expressed by the venom gland.

It is found in the secreted. This protein is an alkaline zinc metalloprotease from snake venom that possesses weak hemorrhagic activity. This chain is Snake venom metalloproteinase aculysin-1, found in Deinagkistrodon acutus (Hundred-pace snake).